The chain runs to 194 residues: Dephospho-CoA kinase (194 aa).

The DPCK domain maps to 4–194 (VIGLTGSIGM…VKEILQKLGA (191 aa)). 12–17 (GMGKTT) lines the ATP pocket.

It belongs to the CoaE family.

Its subcellular location is the cytoplasm. The enzyme catalyses 3'-dephospho-CoA + ATP = ADP + CoA + H(+). It participates in cofactor biosynthesis; coenzyme A biosynthesis; CoA from (R)-pantothenate: step 5/5. In terms of biological role, catalyzes the phosphorylation of the 3'-hydroxyl group of dephosphocoenzyme A to form coenzyme A. This Agrobacterium fabrum (strain C58 / ATCC 33970) (Agrobacterium tumefaciens (strain C58)) protein is Dephospho-CoA kinase.